The chain runs to 252 residues: Trans-aconitate 2-methyltransferase (252 aa).

The protein belongs to the methyltransferase superfamily. Tam family.

The protein resides in the cytoplasm. The catalysed reaction is trans-aconitate + S-adenosyl-L-methionine = (E)-3-(methoxycarbonyl)pent-2-enedioate + S-adenosyl-L-homocysteine. Functionally, catalyzes the S-adenosylmethionine monomethyl esterification of trans-aconitate. This is Trans-aconitate 2-methyltransferase from Escherichia coli (strain SE11).